A 49-amino-acid polypeptide reads, in one-letter code: uncharacterized protein (49 aa).

This is an uncharacterized protein from Enterobacteria phage T3 (Bacteriophage T3).